Here is a 481-residue protein sequence, read N- to C-terminus: Delta(14)-sterol reductase ERG24B (481 aa).

8 helical membrane passes run 11 to 31 (FGGPLGATGIVFGLPILMQVL), 80 to 100 (LFAYYFLSLMLYRIMPAQIVL), 125 to 145 (LTGCAIGTYIYGANFPVWTWI), 149 to 169 (YIQLLTTSTVLTYIISIWTYL), 244 to 264 (TYGFVSDSIVVIALIQAYYVL), 279 to 299 (ITSDGLGFMLTWGDIVWVPFL), 313 to 333 (HLGPIGVGAIGTVFCIGLYIF), and 427 to 447 (AAPWGMLFTYLYSAWFGFLLI).

The protein belongs to the ERG4/ERG24 family.

It is found in the endoplasmic reticulum membrane. It catalyses the reaction 4,4-dimethyl-5alpha-cholesta-8,24-dien-3beta-ol + NADP(+) = 4,4-dimethyl-5alpha-cholesta-8,14,24-trien-3beta-ol + NADPH + H(+). Its pathway is steroid metabolism; ergosterol biosynthesis. Delta(14)-sterol reductase; part of the third module of ergosterol biosynthesis pathway that includes the late steps of the pathway. Catalyzes the reduction of the C14=C15 double bond within 4,4,24-trimethyl ergosta-8,14,24(28)-trienolto produce 4,4-dimethylfecosterol. The third module or late pathway involves the ergosterol synthesis itself through consecutive reactions that mainly occur in the endoplasmic reticulum (ER) membrane. Firstly, the squalene synthase ERG9 catalyzes the condensation of 2 farnesyl pyrophosphate moieties to form squalene, which is the precursor of all steroids. Squalene synthase is crucial for balancing the incorporation of farnesyl diphosphate (FPP) into sterol and nonsterol isoprene synthesis. Secondly, squalene is converted into lanosterol by the consecutive action of the squalene epoxidase ERG1 and the lanosterol synthase ERG7. Then, the delta(24)-sterol C-methyltransferase ERG6 methylates lanosterol at C-24 to produce eburicol. Eburicol is the substrate of the sterol 14-alpha demethylase encoded by CYP51A, CYP51B and CYP51C, to yield 4,4,24-trimethyl ergosta-8,14,24(28)-trienol. CYP51B encodes the enzyme primarily responsible for sterol 14-alpha-demethylation, and plays an essential role in ascospore formation. CYP51A encodes an additional sterol 14-alpha-demethylase, induced on ergosterol depletion and responsible for the intrinsic variation in azole sensitivity. The third CYP51 isoform, CYP51C, does not encode a sterol 14-alpha-demethylase, but is required for full virulence on host wheat ears. The C-14 reductase ERG24 then reduces the C14=C15 double bond which leads to 4,4-dimethylfecosterol. A sequence of further demethylations at C-4, involving the C-4 demethylation complex containing the C-4 methylsterol oxidases ERG25, the sterol-4-alpha-carboxylate 3-dehydrogenase ERG26 and the 3-keto-steroid reductase ERG27, leads to the production of fecosterol via 4-methylfecosterol. ERG28 has a role as a scaffold to help anchor ERG25, ERG26 and ERG27 to the endoplasmic reticulum. The C-8 sterol isomerase ERG2 then catalyzes the reaction which results in unsaturation at C-7 in the B ring of sterols and thus converts fecosterol to episterol. The sterol-C5-desaturases ERG3A and ERG3BB then catalyze the introduction of a C-5 double bond in the B ring to produce 5-dehydroepisterol. The C-22 sterol desaturases ERG5A and ERG5B further convert 5-dehydroepisterol into ergosta-5,7,22,24(28)-tetraen-3beta-ol by forming the C-22(23) double bond in the sterol side chain. Finally, ergosta-5,7,22,24(28)-tetraen-3beta-ol is substrate of the C-24(28) sterol reductase ERG4 to produce ergosterol. This chain is Delta(14)-sterol reductase ERG24B, found in Gibberella zeae (strain ATCC MYA-4620 / CBS 123657 / FGSC 9075 / NRRL 31084 / PH-1) (Wheat head blight fungus).